A 700-amino-acid polypeptide reads, in one-letter code: Calpain-2 catalytic subunit (700 aa).

A propeptide spans 2 to 19 (AGMAAALAKERAAAAGAG) (anchors to the small subunit). The region spanning 45–344 (LFHDPSFPAG…YSRLEICNLT (300 aa)) is the Calpain catalytic domain. The Ca(2+) site is built by glycine 91 and aspartate 96. Cysteine 105 is an active-site residue. Positions 175, 229, and 230 each coordinate Ca(2+). Residues histidine 262 and asparagine 286 contribute to the active site. 3 residues coordinate Ca(2+): glutamate 292, aspartate 299, and glutamate 323. A domain III region spans residues 345 to 514 (PDTLASDRYK…KNANSTVIDD (170 aa)). The segment at 515-529 (EIEANFEETEIDEDD) is linker. Positions 530–700 (IEPSFKKLFG…LINWLFFTVI (171 aa)) are domain IV. Ca(2+) is bound by residues alanine 542, aspartate 545, glutamate 547, glutamate 552, aspartate 585, aspartate 587, serine 589, lysine 591, glutamate 596, aspartate 615, aspartate 617, serine 619, threonine 621, glutamate 626, aspartate 658, and asparagine 661. EF-hand domains follow at residues 572–605 (FSIETCKIMVDLLDNDGSGKLGLKEFHTLWTKIQ) and 602–637 (TKIQKYQKIYREIDVDRSGTMNSYEMRRALEAAGFK). Residues 667-700 (IRLETLYKMFRKLDTEKTGTIELNLINWLFFTVI) form the EF-hand 3 domain.

Belongs to the peptidase C2 family. As to quaternary structure, forms a heterodimer with a small (regulatory) subunit (CAPNS1). It depends on Ca(2+) as a cofactor. As to expression, ubiquitous.

The protein localises to the cytoplasm. It localises to the cell membrane. It catalyses the reaction Broad endopeptidase specificity.. Activated by 200-1000 micromolar concentrations of calcium and inhibited by calpastatin. Calcium-regulated non-lysosomal thiol-protease which catalyze limited proteolysis of substrates involved in cytoskeletal remodeling and signal transduction. The polypeptide is Calpain-2 catalytic subunit (CAPN2) (Gallus gallus (Chicken)).